Consider the following 138-residue polypeptide: Small ribosomal subunit protein uS11c (138 aa).

Positions Met-1–Ala-22 are disordered. Positions Arg-12–Ala-22 are enriched in basic residues.

Belongs to the universal ribosomal protein uS11 family. As to quaternary structure, part of the 30S ribosomal subunit.

It localises to the plastid. It is found in the chloroplast. The sequence is that of Small ribosomal subunit protein uS11c from Fagopyrum esculentum subsp. ancestrale (Wild buckwheat).